The sequence spans 879 residues: Protein P (879 aa).

Residues 1–184 are terminal protein domain (TP); the sequence is MHPFSRLFRN…GKPYSWEHRQ (184 aa). The interval 185 to 382 is spacer; the sequence is LVQHNGQQHK…YCIHHIVSSI (198 aa). The interval 304 to 345 is disordered; the sequence is SASNSNKSRSREKAYSSNSTSKRYSPPLNYEKSDFSSPGVRG. Positions 383-724 are polymerase/reverse transcriptase domain (RT); the sequence is DDWGPCTVTG…YEELWPVVRQ (342 aa). Residues 393–634 enclose the Reverse transcriptase domain; it reads DVTIKSPRTP…NHLHFMGYVI (242 aa). Asp-465, Asp-585, and Asp-586 together coordinate Mg(2+).

Belongs to the hepadnaviridae P protein family.

The catalysed reaction is DNA(n) + a 2'-deoxyribonucleoside 5'-triphosphate = DNA(n+1) + diphosphate. It carries out the reaction Endonucleolytic cleavage to 5'-phosphomonoester.. Activated by host HSP70 and HSP40 in vitro to be able to bind the epsilon loop of the pgRNA. Because deletion of the RNase H region renders the protein partly chaperone-independent, the chaperones may be needed indirectly to relieve occlusion of the RNA-binding site by this domain. Inhibited by several reverse-transcriptase inhibitors: Lamivudine, Adefovir and Entecavir. Functionally, multifunctional enzyme that converts the viral RNA genome into dsDNA in viral cytoplasmic capsids. This enzyme displays a DNA polymerase activity that can copy either DNA or RNA templates, and a ribonuclease H (RNase H) activity that cleaves the RNA strand of RNA-DNA heteroduplexes in a partially processive 3'- to 5'-endonucleasic mode. Neo-synthesized pregenomic RNA (pgRNA) are encapsidated together with the P protein, and reverse-transcribed inside the nucleocapsid. Initiation of reverse-transcription occurs first by binding the epsilon loop on the pgRNA genome, and is initiated by protein priming, thereby the 5'-end of (-)DNA is covalently linked to P protein. Partial (+)DNA is synthesized from the (-)DNA template and generates the relaxed circular DNA (RC-DNA) genome. After budding and infection, the RC-DNA migrates in the nucleus, and is converted into a plasmid-like covalently closed circular DNA (cccDNA). The activity of P protein does not seem to be necessary for cccDNA generation, and is presumably released from (+)DNA by host nuclear DNA repair machinery. The sequence is that of Protein P from Woodchuck hepatitis B virus (isolate 1) (WHV).